Consider the following 159-residue polypeptide: SsrA-binding protein (159 aa).

Belongs to the SmpB family.

Its subcellular location is the cytoplasm. In terms of biological role, required for rescue of stalled ribosomes mediated by trans-translation. Binds to transfer-messenger RNA (tmRNA), required for stable association of tmRNA with ribosomes. tmRNA and SmpB together mimic tRNA shape, replacing the anticodon stem-loop with SmpB. tmRNA is encoded by the ssrA gene; the 2 termini fold to resemble tRNA(Ala) and it encodes a 'tag peptide', a short internal open reading frame. During trans-translation Ala-aminoacylated tmRNA acts like a tRNA, entering the A-site of stalled ribosomes, displacing the stalled mRNA. The ribosome then switches to translate the ORF on the tmRNA; the nascent peptide is terminated with the 'tag peptide' encoded by the tmRNA and targeted for degradation. The ribosome is freed to recommence translation, which seems to be the essential function of trans-translation. This chain is SsrA-binding protein, found in Coxiella burnetii (strain CbuK_Q154) (Coxiella burnetii (strain Q154)).